Here is a 188-residue protein sequence, read N- to C-terminus: Crossover junction endodeoxyribonuclease RuvC (188 aa).

Catalysis depends on residues Asp14, Glu74, and Asp149. Mg(2+) is bound by residues Asp14, Glu74, and Asp149.

Belongs to the RuvC family. In terms of assembly, homodimer which binds Holliday junction (HJ) DNA. The HJ becomes 2-fold symmetrical on binding to RuvC with unstacked arms; it has a different conformation from HJ DNA in complex with RuvA. In the full resolvosome a probable DNA-RuvA(4)-RuvB(12)-RuvC(2) complex forms which resolves the HJ. Requires Mg(2+) as cofactor.

Its subcellular location is the cytoplasm. The enzyme catalyses Endonucleolytic cleavage at a junction such as a reciprocal single-stranded crossover between two homologous DNA duplexes (Holliday junction).. Functionally, the RuvA-RuvB-RuvC complex processes Holliday junction (HJ) DNA during genetic recombination and DNA repair. Endonuclease that resolves HJ intermediates. Cleaves cruciform DNA by making single-stranded nicks across the HJ at symmetrical positions within the homologous arms, yielding a 5'-phosphate and a 3'-hydroxyl group; requires a central core of homology in the junction. The consensus cleavage sequence is 5'-(A/T)TT(C/G)-3'. Cleavage occurs on the 3'-side of the TT dinucleotide at the point of strand exchange. HJ branch migration catalyzed by RuvA-RuvB allows RuvC to scan DNA until it finds its consensus sequence, where it cleaves and resolves the cruciform DNA. The protein is Crossover junction endodeoxyribonuclease RuvC of Bacteroides fragilis (strain ATCC 25285 / DSM 2151 / CCUG 4856 / JCM 11019 / LMG 10263 / NCTC 9343 / Onslow / VPI 2553 / EN-2).